The chain runs to 231 residues: Ion-translocating oxidoreductase complex subunit E (231 aa).

Helical transmembrane passes span 18-38, 39-59, 69-89, 93-113, 127-147, and 182-202; these read GLVQ…LTNA, LGLG…VSLV, IPVF…FINA, GLYL…VIIG, STFD…VLGA, and TFLL…LIAL.

Belongs to the NqrDE/RnfAE family. In terms of assembly, the complex is composed of six subunits: RnfA, RnfB, RnfC, RnfD, RnfE and RnfG.

It is found in the cell inner membrane. Functionally, part of a membrane-bound complex that couples electron transfer with translocation of ions across the membrane. This chain is Ion-translocating oxidoreductase complex subunit E, found in Shewanella piezotolerans (strain WP3 / JCM 13877).